A 354-amino-acid chain; its full sequence is Replication factor C subunit 5 (354 aa).

ATP-binding positions include Val-5, Ser-17, 43–51 (GPNGTGKKT), and Arg-231.

This sequence belongs to the activator 1 small subunits family. Replication factor C (RFC) is a heteropentamer of subunits RFC1, RFC2, RFC3, RFC4 and RFC5 and forms a complex with POL30/PCNA in the presence of ATP. Component of the RAD24-RFC complex which consists of RAD24, RFC2, RFC3, RFC4 and RFC5 and associates with the checkpoint clamp DDC1:MEC3:RAD17 complex. Component of the ELG1-RFC complex which consists of ELG1, RFC2, RFC3, RFC4 and RFC5. Component of the CTF18-RFC complex, which consists of CTF18, CTF8, DCC1, RFC2, RFC3, RFC4 and RFC5. RFC5 interacts with ECO1.

Its subcellular location is the nucleus. Component of ATP-dependent clamp loader (RFC and RFC-like) complexes for DNA clamps, such as the POL30/PCNA homotrimer and the checkpoint clamp DDC1:MEC3:RAD17 complex. During a clamp loading circle, the RFC:clamp complex binds to DNA and the recognition of the double-stranded/single-stranded junction stimulates ATP hydrolysis by RFC. The complex presumably provides bipartite ATP sites in which one subunit supplies a catalytic site for hydrolysis of ATP bound to the neighboring subunit. Dissociation of RFC from the clamp leaves the clamp encircling DNA. Component of the replication factor C (RFC or activator 1) complex which loads POL30/PCNA and acts during elongation of primed DNA templates by DNA polymerase delta and epsilon. RFC has an essential but redundant activity in sister chromatid cohesion establishment. Component of the RFC-like complex CTF18-RFC which is required for efficient establishment of chromosome cohesion during S-phase and may load or unload POL30/PCNA. Component of the RFC-like RAD24-RFC complex which loads the checkpoint clamp DDC1:MEC3:RAD17 complex and is involved in DNA repair pathways. Component of the RFC-like ELG1-RFC complex which appears to have a role in DNA replication, replication fork re-start, recombination and repair. The sequence is that of Replication factor C subunit 5 (RFC5) from Saccharomyces cerevisiae (strain ATCC 204508 / S288c) (Baker's yeast).